The primary structure comprises 473 residues: Catalase easC (473 aa).

Residues 1–15 (MASEVSVASSGSEHS) show a composition bias toward low complexity. Residues 1–31 (MASEVSVASSGSEHSGAQKCPFQDPGLSSMD) are disordered. Residue His-54 is part of the active site. Tyr-344 provides a ligand contact to heme. Residues 352–389 (LGPNNLDLPANRTKKLADGSRPEKAEMAPQKVPSQEHA) form a disordered region. The segment covering 366 to 377 (KLADGSRPEKAE) has biased composition (basic and acidic residues).

The protein belongs to the catalase family. The cofactor is heme.

It functions in the pathway alkaloid biosynthesis; ergot alkaloid biosynthesis. Functionally, catalase; part of the gene cluster that mediates the biosynthesis of fungal ergot alkaloid. DmaW catalyzes the first step of ergot alkaloid biosynthesis by condensing dimethylallyl diphosphate (DMAP) and tryptophan to form 4-dimethylallyl-L-tryptophan. The second step is catalyzed by the methyltransferase easF that methylates 4-dimethylallyl-L-tryptophan in the presence of S-adenosyl-L-methionine, resulting in the formation of 4-dimethylallyl-L-abrine. The catalase easC and the FAD-dependent oxidoreductase easE then transform 4-dimethylallyl-L-abrine to chanoclavine-I which is further oxidized by easD in the presence of NAD(+), resulting in the formation of chanoclavine-I aldehyde. Agroclavine dehydrogenase easG then mediates the conversion of chanoclavine-I aldehyde to agroclavine via a non-enzymatic adduct reaction: the substrate is an iminium intermediate that is formed spontaneously from chanoclavine-I aldehyde in the presence of glutathione. The presence of easA is not required to complete this reaction. Further conversion of agroclavine to paspalic acid is a two-step process involving oxidation of agroclavine to elymoclavine and of elymoclavine to paspalic acid, the second step being performed by the elymoclavine oxidase cloA. Paspalic acid is then further converted to D-lysergic acid. Ergopeptines are assembled from D-lysergic acid and three different amino acids by the D-lysergyl-peptide-synthetases composed each of a monomudular and a trimodular nonribosomal peptide synthetase subunit. LpsB and lpsC encode the monomodular subunits responsible for D-lysergic acid activation and incorporation into the ergopeptine backbone. LpsA1 and A2 subunits encode the trimodular nonribosomal peptide synthetase assembling the tripeptide portion of ergopeptines. LpsA1 is responsible for formation of the major ergopeptine, ergotamine, and lpsA2 for alpha-ergocryptine, the minor ergopeptine of the total alkaloid mixture elaborated by C.purpurea. D-lysergyl-tripeptides are assembled by the nonribosomal peptide synthetases and released as N-(D-lysergyl-aminoacyl)-lactams. Cyclolization of the D-lysergyl-tripeptides is performed by the Fe(2+)/2-ketoglutarate-dependent dioxygenase easH which introduces a hydroxyl group into N-(D-lysergyl-aminoacyl)-lactam at alpha-C of the aminoacyl residue followed by spontaneous condensation with the terminal lactam carbonyl group. This Claviceps purpurea (strain 20.1) (Ergot fungus) protein is Catalase easC.